The following is a 572-amino-acid chain: Arginine--tRNA ligase (572 aa).

Positions 122–132 (PNLAKEMHVGH) match the 'HIGH' region motif.

It belongs to the class-I aminoacyl-tRNA synthetase family. In terms of assembly, monomer.

It is found in the cytoplasm. The enzyme catalyses tRNA(Arg) + L-arginine + ATP = L-arginyl-tRNA(Arg) + AMP + diphosphate. The polypeptide is Arginine--tRNA ligase (Neisseria meningitidis serogroup C / serotype 2a (strain ATCC 700532 / DSM 15464 / FAM18)).